The sequence spans 360 residues: Dihydroorotate dehydrogenase (quinone) (360 aa).

FMN-binding positions include 66–70 (AGFDK) and Thr-90. Lys-70 contacts substrate. 115–119 (NRMGF) contributes to the substrate binding site. FMN is bound by residues Asn-143 and Asn-176. Asn-176 is a substrate binding site. Ser-179 acts as the Nucleophile in catalysis. Asn-181 contacts substrate. Residues Lys-212 and Thr-240 each contribute to the FMN site. Position 241–242 (241–242 (NT)) interacts with substrate. Residues Gly-264, Gly-293, and 314–315 (YT) each bind FMN.

The protein belongs to the dihydroorotate dehydrogenase family. Type 2 subfamily. Monomer. The cofactor is FMN.

It is found in the cell membrane. The catalysed reaction is (S)-dihydroorotate + a quinone = orotate + a quinol. Its pathway is pyrimidine metabolism; UMP biosynthesis via de novo pathway; orotate from (S)-dihydroorotate (quinone route): step 1/1. Functionally, catalyzes the conversion of dihydroorotate to orotate with quinone as electron acceptor. The polypeptide is Dihydroorotate dehydrogenase (quinone) (Mycobacterium marinum (strain ATCC BAA-535 / M)).